A 101-amino-acid polypeptide reads, in one-letter code: Protein S100-A3 (101 aa).

A2 carries the N-acetylalanine modification. 2 EF-hand domains span residues I12–P47 and F50–Y85. 2 residues coordinate Ca(2+): K28 and E33. C30 and C68 are joined by a disulfide. At R51 the chain carries Citrulline; by PAD3. Positions 63, 65, 67, 69, and 74 each coordinate Ca(2+). A disulfide bridge connects residues C81 and C99. The Zn(2+) site is built by C83, C86, H87, and C93.

It belongs to the S-100 family. As to quaternary structure, homodimer and homotetramer for the citrullinated form. More than half of the arginine residues undergo citrullination by PAD1 and PAD2. Arg-51 is specifically citrullinated by PAD3 and promotes tetramerization. In terms of tissue distribution, skin specific, specifically expressed at the inner endocuticle of hair fibers.

Its subcellular location is the cytoplasm. Functionally, binds both calcium and zinc. May be involved in calcium-dependent cuticle cell differentiation, hair shaft and hair cuticular barrier formation. In Homo sapiens (Human), this protein is Protein S100-A3 (S100A3).